Reading from the N-terminus, the 593-residue chain is ATPase family AAA domain-containing protein 3-B (593 aa).

Disordered regions lie at residues 1–64, 109–129, and 145–164; these read MSWL…LDQS, EEKRKTLNEETKQHQARAQYQ, and QLQNEENLRRQEESVQKQEA. At 1–242 the chain is on the mitochondrial intermembrane side; sequence MSWLFGLNRG…FRTFISDWDK (242 aa). Residues 12–27 are compositionally biased toward pro residues; sequence PEPPGVPGFPEPPSPP. Composition is skewed to basic and acidic residues over residues 33 to 44, 53 to 64, 109 to 121, and 150 to 164; these read GGDKNRPKDKWS, RAAKAARELDQS, EEKRKTLNEETKQ, and ENLRRQEESVQKQEA. Residues 51-215 adopt a coiled-coil conformation; that stretch reads LERAAKAARE…QIRLKAAEHR (165 aa). A helical membrane pass occupies residues 243-260; it reads VTATVAGLTLLAVGVYTA. Residues 261 to 593 lie on the Mitochondrial matrix side of the membrane; it reads KNGTGVAGRY…LQPLLEGTPV (333 aa). ATP is bound at residue 348 to 355; the sequence is GPPGTGKT. Residues 570–580 are compositionally biased toward basic and acidic residues; the sequence is AEGKESTKEIG. Residues 570–593 are disordered; that stretch reads AEGKESTKEIGKNPLQPLLEGTPV.

Belongs to the AAA ATPase family. Can form homooligomers. Homodimer formation at the N-terminus may be regulated by ATP and is required for the interaction with the inner surface of the mitochondrial outer membrane and correct mitochondrial homeostasis.

The protein localises to the mitochondrion inner membrane. Its subcellular location is the mitochondrion matrix. It localises to the mitochondrion nucleoid. It carries out the reaction ATP + H2O = ADP + phosphate + H(+). Its function is as follows. Essential for mitochondrial network organization, mitochondrial metabolism and cell growth at organism and cellular level. May play an important role in mitochondrial protein synthesis. May also participate in mitochondrial DNA replication. May bind to mitochondrial DNA D-loops and contribute to nucleoid stability. Required for enhanced channeling of cholesterol for hormone-dependent steroidogenesis. Involved in mitochondrial-mediated antiviral innate immunity. Required to protect mitochondria from the PERK-mediated unfolded protein response: specifically inhibits the activity of EIF2AK3/PERK at mitochondria-endoplasmic reticulum contact sites, thereby providing a safe haven for mitochondrial protein translation during endoplasmic reticulum stress. Ability to inhibit EIF2AK3/PERK is independent of its ATPase activity. Also involved in the mitochondrial DNA damage response by promoting signaling between damaged genomes and the mitochondrial membrane, leading to activation of the integrated stress response (ISR). The chain is ATPase family AAA domain-containing protein 3-B (atad3-b) from Xenopus laevis (African clawed frog).